A 737-amino-acid polypeptide reads, in one-letter code: MNGDSRAAVVTSPPPTTAPHKERYFDRVDENNPEYLRERNMAPDLRQDFNMMEQKKRVSMILQSPAFCEELESMIQEQFKKGKNPTGLLALQQIADFMTTNVPNVYPAAPQGGMAALNMSLGMVTPVNDLRGSDSIAYDKGEKLLRCKLAAFYRLADLFGWSQLIYNHITTRVNSEQEHFLIVPFGLLYSEVTASSLVKINLQGDIVDRGSTNLGVNQAGFTLHSAIYAARPDVKCVVHIHTPAGAAVSAMKCGLLPISPEALSLGEVAYHDYHGILVDEEEKVLIQKNLGPKSKVLILRNHGLVSVGESVEEAFYYIHNLVVACEIQVRTLASAGGPDNLVLLNPEKYKAKSRSPGSPVGEGTGSPPKWQIGEQEFEALMRMLDNLGYRTGYPYRYPALREKSKKYSDVEVPASVTGYSFASDGDSGTCSPLRHSFQKQQREKTRWLNSGRGDEASEEGQNGSSPKSKTKWTKEDGHRTSTSAVPNLFVPLNTNPKEVQEMRNKIREQNLQDIKTAGPQSQVLCGVVMDRSLVQGELVTASKAIIEKEYQPHVIVSTTGPNPFTTLTDRELEEYRREVERKQKGSEENLDEAREQKEKSPPDQPAVPHPPPSTPIKLEEDLVPEPTTGDDSDAATFKPTLPDLSPDEPSEALGFPMLEKEEEAHRPPSPTEAPTEASPEPAPDPAPVAEEAAPSAVEEGAAADPGSDGSPGKSPSKKKKKFRTPSFLKKSKKKSDS.

Met-1 bears the N-acetylmethionine mark. Residues Met-1–Lys-21 form a disordered region. Ser-12 is modified (phosphoserine). The residue at position 59 (Ser-59) is a Phosphoserine; by PKA. The residue at position 64 (Ser-64) is a Phosphoserine. Phosphothreonine is present on Thr-331. 5 positions are modified to phosphoserine: Ser-334, Ser-353, Ser-355, Ser-358, and Ser-366. At Ser-408 the chain carries Phosphoserine; by PKA. Disordered regions lie at residues Phe-421–Pro-486 and Arg-576–Ser-737. Position 427 is a phosphoserine (Ser-427). Position 429 is a phosphothreonine (Thr-429). Ser-431 bears the Phosphoserine mark. Phosphoserine; by PKA is present on Ser-436. Thr-445 bears the Phosphothreonine; by ROCK2 mark. A phosphoserine mark is found at Ser-464 and Ser-465. Position 480 is a phosphothreonine; by ROCK2 (Thr-480). Ser-481 bears the Phosphoserine; by PKA mark. Positions Arg-576 to Pro-601 are enriched in basic and acidic residues. Ser-586, Ser-600, and Ser-613 each carry phosphoserine. The segment covering Pro-602–Thr-614 has biased composition (pro residues). Thr-614 bears the Phosphothreonine mark. Ser-678, Ser-707, Ser-710, and Ser-714 each carry phosphoserine. The segment covering Pro-687–Ser-714 has biased composition (low complexity). Positions Pro-715 to Ser-737 are enriched in basic residues. Ser-716 is modified (phosphoserine; by PKC). Positions Lys-717–Lys-734 are interaction with calmodulin. Phosphoserine; by PKA and PKC is present on Ser-726.

It belongs to the aldolase class II family. Adducin subfamily. In terms of assembly, heterodimer of an alpha and a beta subunit or an alpha and a gamma subunit. Expressed in all tissues. Found in much higher levels in reticulocytes than the beta subunit.

The protein localises to the cytoplasm. It is found in the cytoskeleton. Its subcellular location is the cell membrane. Functionally, membrane-cytoskeleton-associated protein that promotes the assembly of the spectrin-actin network. Binds to calmodulin. The chain is Alpha-adducin (ADD1) from Homo sapiens (Human).